We begin with the raw amino-acid sequence, 966 residues long: Serine/threonine-protein kinase 10 (966 aa).

2 positions are modified to phosphoserine: S13 and S20. The 259-residue stretch at 36-294 (WEIVGELGDG…AAQLLQHPFV (259 aa)) folds into the Protein kinase domain. Residues 42–50 (LGDGAFGKV) and K65 contribute to the ATP site. D157 (proton acceptor) is an active-site residue. The segment at 175–224 (DFGVSAKNLKTLQKRDSFIGTPYWMAPEVVLCETMKDAPYDYKADIWSLG) is activation segment. At T185 the chain carries Phosphothreonine; by autocatalysis. A Phosphoserine modification is found at S191. Composition is skewed to polar residues over residues 341–363 (TQDSANVTQPSLDSNKLLQDSST) and 371–392 (QEPVSGSCSQPSGDGPLQTTSP). The interval 341–497 (TQDSANVTQP…NLSTSESMDY (157 aa)) is disordered. The segment covering 421–430 (IQMDEEKQIP) has biased composition (basic and acidic residues). Residues S437, S449, S453, and S484 each carry the phosphoserine modification. The segment covering 438 to 456 (PAASKSQKANQSRPNSSAL) has biased composition (polar residues). The segment covering 485 to 497 (DCSNLSTSESMDY) has biased composition (polar residues). Residues S513 and S548 each carry the phosphoserine modification. A coiled-coil region spans residues 588–936 (LQLEQMHKRF…LNQKKREQEM (349 aa)). Disordered stretches follow at residues 660-692 (KKEVKSEVEKLPRQQRKESMKQKMEEHSQKKQR), 826-865 (INGAGSASEQREKIKQFSQQEEKRQKAERLQQQQKHENQM), and 901-966 (LDES…GDAS). 2 stretches are compositionally biased toward basic and acidic residues: residues 834-865 (EQREKIKQFSQQEEKRQKAERLQQQQKHENQM) and 901-946 (LDES…EAEP). T950 carries the post-translational modification Phosphothreonine. The segment covering 950–966 (TPSKASNFFPYSSGDAS) has biased composition (polar residues).

This sequence belongs to the protein kinase superfamily. STE Ser/Thr protein kinase family. STE20 subfamily. As to quaternary structure, homodimer; homodimerization is required for activation segment autophosphorylation. Post-translationally, autophosphorylates following homodimerization, leading to activation of the protein. Expressed predominantly in lymphoid organs such as spleen, thymus, and bone marrow.

The protein localises to the cell membrane. It carries out the reaction L-seryl-[protein] + ATP = O-phospho-L-seryl-[protein] + ADP + H(+). The enzyme catalyses L-threonyl-[protein] + ATP = O-phospho-L-threonyl-[protein] + ADP + H(+). Its activity is regulated as follows. Inhibited by the pyrrole-indolinone inhibitor SU11274 (K00593): intercalates between the ATP-binding Lys-65 and alpha-C glutamate (Glu-81), resulting in a partial disordering of the lysine side chain. Also specifically inhibited by erlotinib. Slightly inhibited by gefitinib. Serine/threonine-protein kinase involved in regulation of lymphocyte migration. Phosphorylates MSN, and possibly PLK1. Involved in regulation of lymphocyte migration by mediating phosphorylation of ERM proteins such as MSN. Acts as a negative regulator of MAP3K1/MEKK1. May also act as a cell cycle regulator by acting as a polo kinase kinase: mediates phosphorylation of PLK1 in vitro; however such data require additional evidences in vivo. This chain is Serine/threonine-protein kinase 10 (Stk10), found in Mus musculus (Mouse).